We begin with the raw amino-acid sequence, 570 residues long: Periplasmic trehalase (570 aa).

A signal peptide spans 1–34 (MIPPEIRRSVLLQKAIKLALAGTLLTFASFSATA). Substrate-binding positions include arginine 159, 166 to 167 (WD), asparagine 203, 212 to 214 (RSQ), 284 to 286 (RPE), and glycine 317. Active-site proton donor/acceptor residues include aspartate 319 and glutamate 503. Position 518 (glutamate 518) interacts with substrate. A disordered region spans residues 544-570 (KPCDSVPSTRPASLSATPTKTPSAATQ). Over residues 554–570 (PASLSATPTKTPSAATQ) the composition is skewed to low complexity.

The protein belongs to the glycosyl hydrolase 37 family. As to quaternary structure, monomer.

It is found in the periplasm. It catalyses the reaction alpha,alpha-trehalose + H2O = alpha-D-glucose + beta-D-glucose. Functionally, provides the cells with the ability to utilize trehalose at high osmolarity by splitting it into glucose molecules that can subsequently be taken up by the phosphotransferase-mediated uptake system. The sequence is that of Periplasmic trehalase from Salmonella newport (strain SL254).